A 142-amino-acid polypeptide reads, in one-letter code: Transcription antitermination protein NusB (142 aa).

This sequence belongs to the NusB family.

Involved in transcription antitermination. Required for transcription of ribosomal RNA (rRNA) genes. Binds specifically to the boxA antiterminator sequence of the ribosomal RNA (rrn) operons. This chain is Transcription antitermination protein NusB, found in Anaeromyxobacter dehalogenans (strain 2CP-1 / ATCC BAA-258).